Reading from the N-terminus, the 279-residue chain is Thermitase (279 aa).

Residue Asp-5 coordinates Ca(2+). The Peptidase S8 domain maps to 12–277 (QYGPQKIQAP…KGRVNAYKAV (266 aa)). The Charge relay system role is filled by Asp-38. Asp-47, Asp-57, Asp-60, Asp-62, Thr-64, and Gln-66 together coordinate Ca(2+). His-71 (charge relay system) is an active-site residue. Residues Val-82, Asn-85, Thr-87, and Ile-89 each contribute to the Ca(2+) site. Na(+) is bound by residues Ala-173, Tyr-175, and Ala-178. Residues Val-199 and Asp-201 each contribute to the Ca(2+) site. Asp-201 contacts Na(+). Catalysis depends on Ser-225, which acts as the Charge relay system.

This sequence belongs to the peptidase S8 family. Ca(2+) is required as a cofactor. Na(+) serves as cofactor.

Its subcellular location is the secreted. The enzyme catalyses Hydrolysis of proteins, including collagen.. In Thermoactinomyces vulgaris, this protein is Thermitase.